A 255-amino-acid chain; its full sequence is MIEEAPRIIAHSRFLIAFTGAGVSAESGIPTFRDRGGLWENYRIEEVATPEAFRKDPNLVWSFYKMRMKIMKGAKPNNAHLALAELEKMGILKAVITQNIDNLHREAGNQHIVELHGNIYRVKCTRCDYMENLLESGKLEDFLKEKNLPKCPECASLLRPDVVWFGEPLPQEALQKAFKLAERADVCLVVGTSAQVFPAAYVPYIVKDNGGSVIEINTKESGITPIADVFIRGKAGEVMQSLLVKVKRCLENKKC.

The region spanning 1 to 253 (MIEEAPRIIA…VKVKRCLENK (253 aa)) is the Deacetylase sirtuin-type domain. NAD(+) is bound at residue 20-39 (GAGVSAESGIPTFRDRGGLW). Substrate contacts are provided by tyrosine 64 and arginine 67. Residue 98-101 (QNID) participates in NAD(+) binding. Histidine 116 (proton acceptor) is an active-site residue. Residues cysteine 124, cysteine 127, cysteine 151, and cysteine 154 each coordinate Zn(2+). NAD(+)-binding positions include 191-193 (GTS), 217-219 (NTK), and alanine 235.

The protein belongs to the sirtuin family. Class III subfamily. The cofactor is Zn(2+).

The protein resides in the cytoplasm. It carries out the reaction N(6)-acetyl-L-lysyl-[protein] + NAD(+) + H2O = 2''-O-acetyl-ADP-D-ribose + nicotinamide + L-lysyl-[protein]. The catalysed reaction is N(6)-succinyl-L-lysyl-[protein] + NAD(+) + H2O = 2''-O-succinyl-ADP-D-ribose + nicotinamide + L-lysyl-[protein]. Functionally, NAD-dependent lysine deacetylase and desuccinylase that specifically removes acetyl and succinyl groups on target proteins. Modulates the activities of several proteins which are inactive in their acylated form. Deacetylates the N-terminal lysine residue of Alba, the major archaeal chromatin protein and that, in turn, increases Alba's DNA binding affinity, thereby repressing transcription. The chain is NAD-dependent protein deacylase from Thermococcus sibiricus (strain DSM 12597 / MM 739).